The primary structure comprises 393 residues: Dual-specificity RNA methyltransferase RlmN (393 aa).

The Proton acceptor role is filled by E114. The 240-residue stretch at E120–D359 folds into the Radical SAM core domain. C127 and C364 are disulfide-bonded. Residues C134, C138, and C141 each coordinate [4Fe-4S] cluster. S-adenosyl-L-methionine-binding positions include G188–E189, S220, S242–H244, and N321. C364 acts as the S-methylcysteine intermediate in catalysis.

Belongs to the radical SAM superfamily. RlmN family. It depends on [4Fe-4S] cluster as a cofactor.

Its subcellular location is the cytoplasm. The catalysed reaction is adenosine(2503) in 23S rRNA + 2 reduced [2Fe-2S]-[ferredoxin] + 2 S-adenosyl-L-methionine = 2-methyladenosine(2503) in 23S rRNA + 5'-deoxyadenosine + L-methionine + 2 oxidized [2Fe-2S]-[ferredoxin] + S-adenosyl-L-homocysteine. The enzyme catalyses adenosine(37) in tRNA + 2 reduced [2Fe-2S]-[ferredoxin] + 2 S-adenosyl-L-methionine = 2-methyladenosine(37) in tRNA + 5'-deoxyadenosine + L-methionine + 2 oxidized [2Fe-2S]-[ferredoxin] + S-adenosyl-L-homocysteine. Functionally, specifically methylates position 2 of adenine 2503 in 23S rRNA and position 2 of adenine 37 in tRNAs. m2A2503 modification seems to play a crucial role in the proofreading step occurring at the peptidyl transferase center and thus would serve to optimize ribosomal fidelity. The chain is Dual-specificity RNA methyltransferase RlmN from Actinobacillus pleuropneumoniae serotype 3 (strain JL03).